We begin with the raw amino-acid sequence, 514 residues long: 2-isopropylmalate synthase (514 aa).

Residues 5 to 268 form the Pyruvate carboxyltransferase domain; that stretch reads LIIFDTTLRD…DVGLDTTQIV (264 aa). The Mn(2+) site is built by D14, H202, H204, and N239. A regulatory domain region spans residues 395–514; the sequence is KFVSLSQRSE…KDDKLNPQRS (120 aa).

Belongs to the alpha-IPM synthase/homocitrate synthase family. LeuA type 1 subfamily. Homodimer. Requires Mn(2+) as cofactor.

It localises to the cytoplasm. The enzyme catalyses 3-methyl-2-oxobutanoate + acetyl-CoA + H2O = (2S)-2-isopropylmalate + CoA + H(+). It participates in amino-acid biosynthesis; L-leucine biosynthesis; L-leucine from 3-methyl-2-oxobutanoate: step 1/4. Catalyzes the condensation of the acetyl group of acetyl-CoA with 3-methyl-2-oxobutanoate (2-ketoisovalerate) to form 3-carboxy-3-hydroxy-4-methylpentanoate (2-isopropylmalate). In Burkholderia ambifaria (strain MC40-6), this protein is 2-isopropylmalate synthase.